A 200-amino-acid polypeptide reads, in one-letter code: MGMLEQRIQRHFFDSADLKNQAAEVLSKPIADAVQAVLGCITAGGKVLACGNGGSASDAQHFAAEFVGRFERERPGLAAIALNTDTSIITALGNDYDFSAIYAKQVQALGNPGDVLLAITTSGNSANVVAAVDAAHDKDMTVIALTGRGGGKLGARLTETDVHICVPHERTARIQEVHILAIHCLCDAVDVQLLGEQDLT.

The region spanning 37–199 (VLGCITAGGK…DVQLLGEQDL (163 aa)) is the SIS domain. Position 52 to 54 (52 to 54 (NGG)) interacts with substrate. The Zn(2+) site is built by histidine 61 and glutamate 65. Residues glutamate 65, 94-95 (ND), 120-122 (TTS), serine 125, and glutamine 175 contribute to the substrate site. Residues glutamine 175 and histidine 183 each contribute to the Zn(2+) site.

The protein belongs to the SIS family. GmhA subfamily. Homotetramer. Zn(2+) serves as cofactor.

It localises to the cytoplasm. It carries out the reaction 2 D-sedoheptulose 7-phosphate = D-glycero-alpha-D-manno-heptose 7-phosphate + D-glycero-beta-D-manno-heptose 7-phosphate. Its pathway is carbohydrate biosynthesis; D-glycero-D-manno-heptose 7-phosphate biosynthesis; D-glycero-alpha-D-manno-heptose 7-phosphate and D-glycero-beta-D-manno-heptose 7-phosphate from sedoheptulose 7-phosphate: step 1/1. Its function is as follows. Catalyzes the isomerization of sedoheptulose 7-phosphate in D-glycero-D-manno-heptose 7-phosphate. This is Phosphoheptose isomerase from Methylibium petroleiphilum (strain ATCC BAA-1232 / LMG 22953 / PM1).